A 400-amino-acid chain; its full sequence is Subtilisin-like protease 7 (400 aa).

The first 20 residues, 1–20 (MGFITKAIPLALAAASVING), serve as a signal peptide directing secretion. Residues 21–119 (AEIMETRAGV…IERDARVQIN (99 aa)) constitute a propeptide that is removed on maturation. One can recognise an Inhibitor I9 domain in the interval 36-118 (KYIVVMNDGM…YIERDARVQI (83 aa)). N-linked (GlcNAc...) asparagine glycosylation occurs at N58. In terms of domain architecture, Peptidase S8 spans 129–400 (SWGLARVGSK…SKLINNGSGM (272 aa)). Residues D161 and H192 each act as charge relay system in the active site. Residues N222 and N252 are each glycosylated (N-linked (GlcNAc...) asparagine). S346 acts as the Charge relay system in catalysis. N-linked (GlcNAc...) asparagine glycosylation occurs at N396.

This sequence belongs to the peptidase S8 family.

The protein localises to the secreted. In terms of biological role, secreted subtilisin-like serine protease with keratinolytic activity that contributes to pathogenicity. The polypeptide is Subtilisin-like protease 7 (SUB7) (Trichophyton verrucosum (Cattle ringworm fungus)).